The chain runs to 307 residues: Ras-related protein Rab-33 (307 aa).

A disordered region spans residues 19–80; that stretch reads VIDPPKHVTA…IPPAPEAVTA (62 aa). Composition is skewed to pro residues over residues 42-56 and 65-75; these read PTHP…PAVP and PTAPPPIPPAP. 107–114 serves as a coordination point for GTP; the sequence is GNAAVGKT. The Effector region motif lies at 129–137; it reads TEATIGVDF. GTP-binding positions include 155–159 and 217–220; these read DTAGQ and NKCD. 2 S-geranylgeranyl cysteine lipidation sites follow: C306 and C307.

Belongs to the small GTPase superfamily. Rab family.

It is found in the cell membrane. The sequence is that of Ras-related protein Rab-33 (rab-33) from Caenorhabditis elegans.